Here is a 240-residue protein sequence, read N- to C-terminus: Pyridoxine 5'-phosphate synthase (240 aa).

Position 7 (Asn7) interacts with 3-amino-2-oxopropyl phosphate. Asp9–His10 contributes to the 1-deoxy-D-xylulose 5-phosphate binding site. Arg18 provides a ligand contact to 3-amino-2-oxopropyl phosphate. His43 serves as the catalytic Proton acceptor. Arg45 and His50 together coordinate 1-deoxy-D-xylulose 5-phosphate. Glu70 acts as the Proton acceptor in catalysis. A 1-deoxy-D-xylulose 5-phosphate-binding site is contributed by Thr100. His191 functions as the Proton donor in the catalytic mechanism. Residues Gly192 and Gly213–His214 each bind 3-amino-2-oxopropyl phosphate.

This sequence belongs to the PNP synthase family. As to quaternary structure, homooctamer; tetramer of dimers.

It is found in the cytoplasm. It carries out the reaction 3-amino-2-oxopropyl phosphate + 1-deoxy-D-xylulose 5-phosphate = pyridoxine 5'-phosphate + phosphate + 2 H2O + H(+). It functions in the pathway cofactor biosynthesis; pyridoxine 5'-phosphate biosynthesis; pyridoxine 5'-phosphate from D-erythrose 4-phosphate: step 5/5. Functionally, catalyzes the complicated ring closure reaction between the two acyclic compounds 1-deoxy-D-xylulose-5-phosphate (DXP) and 3-amino-2-oxopropyl phosphate (1-amino-acetone-3-phosphate or AAP) to form pyridoxine 5'-phosphate (PNP) and inorganic phosphate. This chain is Pyridoxine 5'-phosphate synthase, found in Microcystis aeruginosa (strain NIES-843 / IAM M-2473).